An 856-amino-acid chain; its full sequence is Translation initiation factor IF-2 (856 aa).

The 171-residue stretch at 356–526 (PRAPVVTVMG…LLIADLLELK (171 aa)) folds into the tr-type G domain. The tract at residues 365 to 372 (GHVDHGKT) is G1. A GTP-binding site is contributed by 365–372 (GHVDHGKT). A G2 region spans residues 390-394 (GITQH). A G3 region spans residues 412-415 (DTPG). GTP contacts are provided by residues 412 to 416 (DTPGH) and 466 to 469 (NKID). Residues 466–469 (NKID) are G4. Positions 502–504 (SAK) are G5.

The protein belongs to the TRAFAC class translation factor GTPase superfamily. Classic translation factor GTPase family. IF-2 subfamily.

It localises to the cytoplasm. One of the essential components for the initiation of protein synthesis. Protects formylmethionyl-tRNA from spontaneous hydrolysis and promotes its binding to the 30S ribosomal subunits. Also involved in the hydrolysis of GTP during the formation of the 70S ribosomal complex. The protein is Translation initiation factor IF-2 of Ehrlichia ruminantium (strain Gardel).